The chain runs to 310 residues: ATP phosphoribosyltransferase (310 aa).

It belongs to the ATP phosphoribosyltransferase family.

The protein resides in the cytoplasm. It carries out the reaction 1-(5-phospho-beta-D-ribosyl)-ATP + diphosphate = 5-phospho-alpha-D-ribose 1-diphosphate + ATP. It functions in the pathway amino-acid biosynthesis; L-histidine biosynthesis; L-histidine from 5-phospho-alpha-D-ribose 1-diphosphate: step 1/9. Catalyzes the condensation of ATP and 5-phosphoribose 1-diphosphate to form N'-(5'-phosphoribosyl)-ATP (PR-ATP). Has a crucial role in the pathway because the rate of histidine biosynthesis seems to be controlled primarily by regulation of HisG enzymatic activity. In Schizosaccharomyces pombe (strain 972 / ATCC 24843) (Fission yeast), this protein is ATP phosphoribosyltransferase (his1).